A 237-amino-acid chain; its full sequence is Probable GTP-binding protein EngB (237 aa).

The 187-residue stretch at Ala-23–Leu-209 folds into the EngB-type G domain. Residues Gly-31–Ser-38, Gly-58–His-62, Asp-82–Gly-85, Thr-149–Asp-152, and Leu-187–Ser-190 each bind GTP. Mg(2+) is bound by residues Ser-38 and Thr-60. Residues Lys-214–Ala-237 form a disordered region. Positions Pro-227–Ala-237 are enriched in pro residues.

It belongs to the TRAFAC class TrmE-Era-EngA-EngB-Septin-like GTPase superfamily. EngB GTPase family. Mg(2+) serves as cofactor.

Its function is as follows. Necessary for normal cell division and for the maintenance of normal septation. The protein is Probable GTP-binding protein EngB of Cupriavidus taiwanensis (strain DSM 17343 / BCRC 17206 / CCUG 44338 / CIP 107171 / LMG 19424 / R1) (Ralstonia taiwanensis (strain LMG 19424)).